The primary structure comprises 495 residues: WD repeat-containing protein 37 (495 aa).

Polar residues-rich tracts occupy residues 1-13 (MPTE…TARQ) and 22-31 (SLSIRRTNSS). The tract at residues 1–50 (MPTESASCSTARQTKQKRKSHSLSIRRTNSSEQERTGLPRDMLEGQDSKL) is disordered. Over residues 32-47 (EQERTGLPRDMLEGQD) the composition is skewed to basic and acidic residues. WD repeat units follow at residues 154-194 (GHRD…CLVK) and 197-236 (GHVG…PTPQ). The interval 237–266 (PVADTSQISGEDEVECSDKDEPDLDGDVSS) is disordered. Residues 246–264 (GEDEVECSDKDEPDLDGDV) show a composition bias toward acidic residues. WD repeat units lie at residues 280 to 319 (SHQG…LVHS), 322 to 361 (GHDQ…IHSV), 366 to 404 (GHTD…SPIA), 407 to 446 (RTDS…LARL), and 453 to 494 (GHRR…LLQE).

In terms of assembly, forms homodimers. Interacts with PACS1. Interacts with PACS2.

The protein resides in the cytoplasm. It localises to the nucleus. Functionally, required for normal ER Ca2+ handling in lymphocytes. Together with PACS1, it plays an essential role in stabilizing peripheral lymphocyte populations. The polypeptide is WD repeat-containing protein 37 (WDR37) (Pongo abelii (Sumatran orangutan)).